The following is a 495-amino-acid chain: Catalase (495 aa).

The interval 1 to 25 (MSNNKKLTSLFGAPVSDRENSMTAG) is disordered. Residues histidine 55 and asparagine 128 contribute to the active site. Tyrosine 338 contacts heme.

Belongs to the catalase family. As to quaternary structure, homodimer. Heme serves as cofactor.

The enzyme catalyses 2 H2O2 = O2 + 2 H2O. In terms of biological role, decomposes hydrogen peroxide into water and oxygen; serves to protect cells from the toxic effects of hydrogen peroxide. This Staphylococcus saprophyticus subsp. saprophyticus (strain ATCC 15305 / DSM 20229 / NCIMB 8711 / NCTC 7292 / S-41) protein is Catalase (katA).